The chain runs to 539 residues: uncharacterized protein (539 aa).

Disordered regions lie at residues 179-203 (SDEL…HSHG) and 433-459 (AQAS…HRDE). Acidic residues predominate over residues 182–192 (LLPDTGEDSDE). Residues 433–442 (AQASARAQAR) are compositionally biased toward low complexity. Over residues 443–455 (AARRGRSAAKARG) the composition is skewed to basic residues.

It belongs to the mycobacterial PPE family.

Its subcellular location is the secreted. This is an uncharacterized protein from Mycobacterium tuberculosis (strain CDC 1551 / Oshkosh).